A 246-amino-acid chain; its full sequence is Metallo-beta-lactamase type 2 (246 aa).

An N-terminal signal peptide occupies residues 1–20; sequence MKKLFVLCVCFFCSITAAGA. Residues His-95, His-97, Asp-99, His-157, and Cys-176 each contribute to the Zn(2+) site. An a beta-lactam-binding site is contributed by Asp-99. 2 residues coordinate a beta-lactam: Lys-179 and Asn-185. His-215 is a Zn(2+) binding site.

The protein belongs to the metallo-beta-lactamase superfamily. Class-B beta-lactamase family. As to quaternary structure, monomer. The cofactor is Zn(2+).

It is found in the periplasm. The enzyme catalyses a beta-lactam + H2O = a substituted beta-amino acid. Its function is as follows. Confers resistance to the different beta-lactam antibiotics (penicillin, cephalosporin and carbapenem) via the hydrolysis of the beta-lactam ring. Exhibits higher catalytic efficiency toward ticarcillin and piperacillin than blaIMP-1. Exhibits catalytic activity for carbapenem compounds, but has a preference for imipenem and ertapenem over meropenem. Has high efficiency for the hydrolysis of cefuroxime. Exhibits hydrolysis of all cephalosporins tested. Exhibits no hydrolysis of temocillin, the 6-alpha-methoxy semisynthetic derivative of ticarcillin. The chain is Metallo-beta-lactamase type 2 from Pseudomonas aeruginosa.